Here is a 285-residue protein sequence, read N- to C-terminus: Pantothenate synthetase (285 aa).

Position 30–37 (30–37 (MGFLHEGH)) interacts with ATP. His-37 serves as the catalytic Proton donor. Position 61 (Gln-61) interacts with (R)-pantoate. A beta-alanine-binding site is contributed by Gln-61. Residue 147–150 (GQKD) participates in ATP binding. Gln-153 contacts (R)-pantoate. ATP-binding positions include Val-176 and 184-187 (KSSR).

Belongs to the pantothenate synthetase family. Homodimer.

Its subcellular location is the cytoplasm. The enzyme catalyses (R)-pantoate + beta-alanine + ATP = (R)-pantothenate + AMP + diphosphate + H(+). Its pathway is cofactor biosynthesis; (R)-pantothenate biosynthesis; (R)-pantothenate from (R)-pantoate and beta-alanine: step 1/1. Its function is as follows. Catalyzes the condensation of pantoate with beta-alanine in an ATP-dependent reaction via a pantoyl-adenylate intermediate. The sequence is that of Pantothenate synthetase from Listeria innocua serovar 6a (strain ATCC BAA-680 / CLIP 11262).